The following is a 110-amino-acid chain: UPF0145 protein (110 aa).

Belongs to the UPF0145 family.

The polypeptide is UPF0145 protein (Listeria ivanovii).